A 66-amino-acid chain; its full sequence is Large ribosomal subunit protein bL31 (66 aa).

Residues cysteine 16, cysteine 18, cysteine 36, and cysteine 39 each coordinate Zn(2+).

The protein belongs to the bacterial ribosomal protein bL31 family. Type A subfamily. In terms of assembly, part of the 50S ribosomal subunit. The cofactor is Zn(2+).

Functionally, binds the 23S rRNA. The polypeptide is Large ribosomal subunit protein bL31 (Campylobacter fetus subsp. fetus (strain 82-40)).